A 316-amino-acid polypeptide reads, in one-letter code: 4-hydroxy-3-methylbut-2-enyl diphosphate reductase (316 aa).

A [4Fe-4S] cluster-binding site is contributed by Cys-12. 2 residues coordinate (2E)-4-hydroxy-3-methylbut-2-enyl diphosphate: His-41 and His-74. Residues His-41 and His-74 each coordinate dimethylallyl diphosphate. Isopentenyl diphosphate contacts are provided by His-41 and His-74. Cys-96 provides a ligand contact to [4Fe-4S] cluster. Residue His-124 participates in (2E)-4-hydroxy-3-methylbut-2-enyl diphosphate binding. His-124 is a binding site for dimethylallyl diphosphate. Position 124 (His-124) interacts with isopentenyl diphosphate. The Proton donor role is filled by Glu-126. Thr-169 lines the (2E)-4-hydroxy-3-methylbut-2-enyl diphosphate pocket. Cys-199 provides a ligand contact to [4Fe-4S] cluster. (2E)-4-hydroxy-3-methylbut-2-enyl diphosphate-binding residues include Ser-227, Ser-228, Asn-229, and Ser-271. The dimethylallyl diphosphate site is built by Ser-227, Ser-228, Asn-229, and Ser-271. 4 residues coordinate isopentenyl diphosphate: Ser-227, Ser-228, Asn-229, and Ser-271.

This sequence belongs to the IspH family. It depends on [4Fe-4S] cluster as a cofactor.

The catalysed reaction is isopentenyl diphosphate + 2 oxidized [2Fe-2S]-[ferredoxin] + H2O = (2E)-4-hydroxy-3-methylbut-2-enyl diphosphate + 2 reduced [2Fe-2S]-[ferredoxin] + 2 H(+). It carries out the reaction dimethylallyl diphosphate + 2 oxidized [2Fe-2S]-[ferredoxin] + H2O = (2E)-4-hydroxy-3-methylbut-2-enyl diphosphate + 2 reduced [2Fe-2S]-[ferredoxin] + 2 H(+). The protein operates within isoprenoid biosynthesis; dimethylallyl diphosphate biosynthesis; dimethylallyl diphosphate from (2E)-4-hydroxy-3-methylbutenyl diphosphate: step 1/1. It participates in isoprenoid biosynthesis; isopentenyl diphosphate biosynthesis via DXP pathway; isopentenyl diphosphate from 1-deoxy-D-xylulose 5-phosphate: step 6/6. In terms of biological role, catalyzes the conversion of 1-hydroxy-2-methyl-2-(E)-butenyl 4-diphosphate (HMBPP) into a mixture of isopentenyl diphosphate (IPP) and dimethylallyl diphosphate (DMAPP). Acts in the terminal step of the DOXP/MEP pathway for isoprenoid precursor biosynthesis. This Xanthomonas campestris pv. campestris (strain 8004) protein is 4-hydroxy-3-methylbut-2-enyl diphosphate reductase.